The primary structure comprises 611 residues: ATP-dependent zinc metalloprotease FtsH (611 aa).

Residue M1 is a topological domain, cytoplasmic. A helical membrane pass occupies residues 2-22 (VKNLIFWLVITVVLMSIFQNF). Topologically, residues 23-98 (NTNDVNNHKV…IGAIPEEPSL (76 aa)) are extracellular. A helical membrane pass occupies residues 99-119 (FISILISWFPMLLLIGVWIFF). At 120-611 (MRQMQMGGGK…KGWIETDTNK (492 aa)) the chain is on the cytoplasmic side. An ATP-binding site is contributed by 192–199 (GPPGTGKT). H414 serves as a coordination point for Zn(2+). E415 is an active-site residue. Zn(2+) is bound by residues H418 and D492.

In the central section; belongs to the AAA ATPase family. It in the C-terminal section; belongs to the peptidase M41 family. In terms of assembly, homohexamer. It depends on Zn(2+) as a cofactor.

Its subcellular location is the cell membrane. Its function is as follows. Acts as a processive, ATP-dependent zinc metallopeptidase for both cytoplasmic and membrane proteins. Plays a role in the quality control of integral membrane proteins. The protein is ATP-dependent zinc metalloprotease FtsH of Buchnera aphidicola subsp. Acyrthosiphon pisum (strain APS) (Acyrthosiphon pisum symbiotic bacterium).